An 824-amino-acid chain; its full sequence is Acyl-homoserine lactone acylase QuiP (824 aa).

The signal sequence occupies residues 1 to 26 (MASPALRHFLPRFGAAAAAASFLSLA). Serine 264 (nucleophile) is an active-site residue.

This sequence belongs to the peptidase S45 family. In terms of assembly, heterodimer of an alpha subunit and a beta subunit processed from the same precursor.

The protein resides in the periplasm. The enzyme catalyses an N-acyl-L-homoserine lactone + H2O = L-homoserine lactone + a carboxylate. Its function is as follows. Catalyzes the deacylation of acyl-homoserine lactone (AHL or acyl-HSL), releasing homoserine lactone (HSL) and the corresponding fatty acid. Possesses a specificity for the degradation of long-chain acyl-HSLs (side chains of seven or more carbons in length). This is Acyl-homoserine lactone acylase QuiP (quiP) from Pseudomonas syringae pv. syringae (strain B728a).